The primary structure comprises 431 residues: Glutamate-1-semialdehyde 2,1-aminomutase (431 aa).

N6-(pyridoxal phosphate)lysine is present on K265.

This sequence belongs to the class-III pyridoxal-phosphate-dependent aminotransferase family. HemL subfamily. In terms of assembly, homodimer. Requires pyridoxal 5'-phosphate as cofactor.

It is found in the cytoplasm. It catalyses the reaction (S)-4-amino-5-oxopentanoate = 5-aminolevulinate. The protein operates within porphyrin-containing compound metabolism; protoporphyrin-IX biosynthesis; 5-aminolevulinate from L-glutamyl-tRNA(Glu): step 2/2. The polypeptide is Glutamate-1-semialdehyde 2,1-aminomutase (Vibrio vulnificus (strain CMCP6)).